We begin with the raw amino-acid sequence, 160 residues long: Tic20 family protein (160 aa).

Helical transmembrane passes span 13 to 33 (FFSA…GGFL), 53 to 73 (FYYQ…MAVV), 87 to 107 (MQAI…AYVI), and 122 to 142 (NFAF…SVLG).

It belongs to the Tic20 family.

The protein resides in the cell membrane. This Synechocystis sp. (strain ATCC 27184 / PCC 6803 / Kazusa) protein is Tic20 family protein.